We begin with the raw amino-acid sequence, 79 residues long: Sulfur carrier protein TusA (79 aa).

The active-site Cysteine persulfide intermediate is the cysteine 17.

Belongs to the sulfur carrier protein TusA family.

The protein resides in the cytoplasm. Its function is as follows. Sulfur carrier protein which probably makes part of a sulfur-relay system. In Idiomarina loihiensis (strain ATCC BAA-735 / DSM 15497 / L2-TR), this protein is Sulfur carrier protein TusA.